Reading from the N-terminus, the 299-residue chain is MTVQYPTIADCVGNTPLVRLQRLPGETSNTLLVKLEGNNPAGSVKDRPALSMITRAELRGDIRPGDTLIEATSGNTGIALAMAAAIKGYKMILIMPDNSTAERKAAMTAYGAELILVSKEEGMEGARDLADKLQREGRGKVLDQFANGDNPEAHYHSTGPEIWQQTGGSITHFVSSMGTTGTIMGVSRYLKEQNPAVQIVGLQPMEGSAIPGIRRWPQEYLPKIYDASRVDRVVDMHQDEAEDIMRRLAREEGIFCGVSSGGAVAAMLRLSRELENAVLVAIICDRGDRYLSSGVYDPR.

Lysine 45 is subject to N6-(pyridoxal phosphate)lysine. Pyridoxal 5'-phosphate is bound by residues asparagine 75, glycine 178 to threonine 182, and serine 259.

This sequence belongs to the cysteine synthase/cystathionine beta-synthase family. The cofactor is pyridoxal 5'-phosphate.

The enzyme catalyses O-acetyl-L-serine + hydrogen sulfide = L-cysteine + acetate. It functions in the pathway amino-acid biosynthesis; L-cysteine biosynthesis; L-cysteine from L-serine: step 2/2. This Pseudomonas aeruginosa (strain ATCC 15692 / DSM 22644 / CIP 104116 / JCM 14847 / LMG 12228 / 1C / PRS 101 / PAO1) protein is Cysteine synthase B (cysM).